A 318-amino-acid chain; its full sequence is Transcriptional regulator NovG (318 aa).

Over residues 146–156 (VASLRSSSTAG) the composition is skewed to polar residues. Positions 146–176 (VASLRSSSTAGTVGRRTGQDGRSRPNDGTDG) are disordered. Basic and acidic residues predominate over residues 162–176 (TGQDGRSRPNDGTDG).

It belongs to the ParB family.

Functionally, transcription regulator that specifically activates expression of genes involved in the novobiocin biosynthesis pathway. Binds 5'-GTTCRACTG(N)(11)CRGTYGAAC-3' DNA sequence. The polypeptide is Transcriptional regulator NovG (novG) (Streptomyces niveus (Streptomyces spheroides)).